The sequence spans 190 residues: Casparian strip membrane protein 1 (190 aa).

The Cytoplasmic segment spans residues 1-24 (MKAESGSADAKLPLPPPVGRKRRG). The helical transmembrane segment at 25–45 (LAILDFLLRLLAIGATLSAAI) threads the bilayer. Over 46 to 72 (AMGTNNETLKFFTQFFQFNARFYNLSA) the chain is Extracellular. 2 N-linked (GlcNAc...) asparagine glycosylation sites follow: Asn-51 and Asn-69. The chain crosses the membrane as a helical span at residues 73–93 (FIYFVIANATVGLYLLLSLPF). At 94–107 (SIFDIVRPRAAAFR) the chain is on the cytoplasmic side. The chain crosses the membrane as a helical span at residues 108–128 (VLLIFFDTVMVAVCTSGAAAA). Topologically, residues 129–157 (TAIMYVARRGNTKTNWFSICQQFNSFCDQ) are extracellular. A helical membrane pass occupies residues 158 to 178 (ATGALGASFAAVVLLILLVLL). Residues 179–190 (SASTLHRQRADF) lie on the Cytoplasmic side of the membrane.

Belongs to the Casparian strip membrane proteins (CASP) family. As to quaternary structure, homodimer and heterodimers.

The protein localises to the cell membrane. In terms of biological role, regulates membrane-cell wall junctions and localized cell wall deposition. Required for establishment of the Casparian strip membrane domain (CSD) and the subsequent formation of Casparian strips, a cell wall modification of the root endodermis that determines an apoplastic barrier between the intraorganismal apoplasm and the extraorganismal apoplasm and prevents lateral diffusion. The protein is Casparian strip membrane protein 1 of Pinus taeda (Loblolly pine).